The following is a 142-amino-acid chain: ATP synthase epsilon chain, chloroplastic (142 aa).

Belongs to the ATPase epsilon chain family. F-type ATPases have 2 components, CF(1) - the catalytic core - and CF(0) - the membrane proton channel. CF(1) has five subunits: alpha(3), beta(3), gamma(1), delta(1), epsilon(1). CF(0) has three main subunits: a, b and c.

Its subcellular location is the plastid. The protein localises to the chloroplast thylakoid membrane. Functionally, produces ATP from ADP in the presence of a proton gradient across the membrane. The protein is ATP synthase epsilon chain, chloroplastic of Ostreococcus tauri.